Here is a 383-residue protein sequence, read N- to C-terminus: Ovalbumin (383 aa).

Residue glycine 2 is modified to N-acetylglycine. Residues 22–48 (HHANDNMLYSPFAILSTLAMVFLGAKD) constitute a signal peptide (not cleaved). Serine 69 is subject to Phosphoserine. A disulfide bridge links cysteine 74 with cysteine 121. N-linked (GlcNAc...) asparagine glycans are attached at residues asparagine 293 and asparagine 312. Serine 345 bears the Phosphoserine mark.

It belongs to the serpin family. Ov-serpin subfamily. Post-translationally, the signal sequence is not cleaved. The functional signal for membrane translocation of ovalbumin becomes accessible when the nascent chain is 50 to 60 residues long. The hydrophobic sequence which lies between residues 27 and 43 folds back on the preceding residues to form an amphipathic hairpin structure which is the signal element recognized by the membrane. Major protein of egg white.

It localises to the secreted. In terms of biological role, storage protein of egg white. Lack protease inhibitory activity. The polypeptide is Ovalbumin (SERPINB14) (Coturnix coturnix (Common quail)).